The chain runs to 31 residues: Cyclopsychotride-A (31 aa).

The cyclopeptide (Ser-Asn) cross-link spans Ser1–Asn31. Intrachain disulfides connect Cys4/Cys21, Cys8/Cys23, and Cys13/Cys28.

This sequence belongs to the cyclotide family. Bracelet subfamily. In terms of processing, this is a cyclic peptide.

Its function is as follows. Probably participates in a plant defense mechanism. Has antibiotic activity. Inhibits the cytopathic effects and replication of the human immunodeficiency virus. Active against both Gram-positive and Gram-negative bacteria. In Psychotria longipes, this protein is Cyclopsychotride-A.